Here is a 654-residue protein sequence, read N- to C-terminus: RING finger protein 112 (654 aa).

The RING-type zinc finger occupies cysteine 80–arginine 121. Residues alanine 154 to glutamate 654 form an interaction with ZBTB16 region. The GB1/RHD3-type G domain occupies aspartate 189 to proline 420. Position 340–341 (arginine 340–aspartate 341) interacts with GTP. Helical transmembrane passes span leucine 570–glycine 590 and glycine 603–valine 623.

This sequence belongs to the TRAFAC class dynamin-like GTPase superfamily. GB1/RHD3 GTPase family. GB1 subfamily. In terms of assembly, self-associates. Interacts with SP1 in an oxidative stress-regulated manner. Interacts with SIGMAR1 in an oxidative stress-regulated manner. Interacts with ZBTB16 (via C2H2-type zinc finger domains 1 and 2). Auto-ubiquitinated. As to expression, expressed in most of the brain areas, including cortex, striatum, hippocampus, thalamus, and cerebellum (at protein level). Expressed in lateral amygdaloid nucleus, and ventromedial hypothalamus. Also expressed strongly in the marginal zone of brain vesicles, optic stalk, and cartilage primordium.

The protein localises to the membrane. The protein resides in the cytoplasm. It is found in the nucleus. It localises to the nuclear body. Its subcellular location is the nucleoplasm. The protein localises to the endosome. The protein resides in the cytoplasmic vesicle. It is found in the secretory vesicle. It localises to the synaptic vesicle. Its subcellular location is the postsynaptic density. The protein localises to the perikaryon. The protein resides in the cell projection. It is found in the neuron projection. The catalysed reaction is S-ubiquitinyl-[E2 ubiquitin-conjugating enzyme]-L-cysteine + [acceptor protein]-L-lysine = [E2 ubiquitin-conjugating enzyme]-L-cysteine + N(6)-ubiquitinyl-[acceptor protein]-L-lysine.. Its pathway is protein modification; protein ubiquitination. E3 ubiquitin-protein ligase that plays an important role in neuronal differentiation, including neurogenesis and gliogenesis, during brain development. During embryonic development initiates neuronal differentiation by inducing cell cycle arrest at the G0/G1 phase through up-regulation of cell-cycle regulatory proteins. Plays a role not only in the fetal period during the development of the nervous system, but also in the adult brain, where it is involved in the maintenance of neural functions and protection of the nervous tissue cells from oxidative stress-induced damage. Exhibits GTPase and E3 ubiquitin-protein ligase activities. Regulates dendritic spine density and synaptic neurotransmission; its ability to hydrolyze GTP is involved in the maintenance of dendritic spine density. This chain is RING finger protein 112 (Rnf112), found in Mus musculus (Mouse).